The chain runs to 197 residues: MSQYQNQYGAQTGMTDEYGNPVNQVDQYGNPISGGGFTGEAGRQHFGTTGGATDHGHGHGQQHRGVDQTTGYGTHTGGVGGYGTNPEYGNTNTGSGYGTGTGYGGSGTNEYVREDHHGDKKGVMDKIKEKIPGTEQSRTNTDGAGYGSTGYGASGGGIGNTGQEYVREEHRVDHGEKKGIMDKIKEKLPGTGGCTGH.

Residues 1 to 14 show a composition bias toward polar residues; it reads MSQYQNQYGAQTGM. Disordered stretches follow at residues 1-86 and 133-197; these read MSQY…GTNP and GTEQ…CTGH. Tandem repeats lie at residues 16–21 and 26–31. The segment at 16-31 is 2 X approximate repeats; that stretch reads DEYGNPVNQVDQYGNP. Residues 74–83 are compositionally biased toward gly residues; it reads THTGGVGGYG. Residues 126–133 form a 2-1 repeat; sequence KIKEKIPG. The segment at 126–190 is 2 X approximate repeats; the sequence is KIKEKIPGTE…MDKIKEKLPG (65 aa). Positions 144-160 are enriched in gly residues; sequence AGYGSTGYGASGGGIGN. Positions 165-188 are enriched in basic and acidic residues; that stretch reads YVREEHRVDHGEKKGIMDKIKEKL. Residues 183 to 190 form a 2-2 repeat; it reads KIKEKLPG.

The protein belongs to the plant dehydrin family. As to expression, shoots, roots, and cotyledon from dehydrating seedlings.

In Pisum sativum (Garden pea), this protein is Dehydrin DHN1 (DHN1).